Reading from the N-terminus, the 239-residue chain is tRNA (guanine-N(7)-)-methyltransferase (239 aa).

S-adenosyl-L-methionine-binding residues include glutamate 69, glutamate 94, aspartate 121, and aspartate 144. Residue aspartate 144 is part of the active site. Lysine 148 is a binding site for substrate. An interaction with RNA region spans residues 150 to 155; it reads RHNKRR. Residues aspartate 180 and 217–220 each bind substrate; that span reads TKFE.

This sequence belongs to the class I-like SAM-binding methyltransferase superfamily. TrmB family. In terms of assembly, monomer.

It catalyses the reaction guanosine(46) in tRNA + S-adenosyl-L-methionine = N(7)-methylguanosine(46) in tRNA + S-adenosyl-L-homocysteine. It functions in the pathway tRNA modification; N(7)-methylguanine-tRNA biosynthesis. Its function is as follows. Catalyzes the formation of N(7)-methylguanine at position 46 (m7G46) in tRNA. The protein is tRNA (guanine-N(7)-)-methyltransferase of Salmonella paratyphi A (strain ATCC 9150 / SARB42).